The primary structure comprises 263 residues: Zinc transporter ZupT (263 aa).

5 helical membrane-spanning segments follow: residues 1-21 (MLFAFGLTLFAGLATGIGGLI), 37-57 (LGFSVGVMLYVSFVEILPGAF), 68-88 (GGSWAAVIGFFGGIALIAIID), 116-136 (MMKMGVLTALAIAIHNFPEGF), and 138-158 (TFLAGLSDPMIAIPVAVAIAI). Fe(2+) is bound by residues N131 and E134. E134 lines the Zn(2+) pocket. H159 serves as a coordination point for Zn(2+). N160, E163, and E192 together coordinate Fe(2+). E163 is a binding site for Zn(2+). A run of 3 helical transmembrane segments spans residues 184–204 (WATLSGLAEPAGALIGFLLLM), 206–226 (FIGPEALGLCFAAVAGVMVFI), and 243–263 (TAIYGLIAGMAVMAISLLLFI).

The protein belongs to the ZIP transporter (TC 2.A.5) family. ZupT subfamily.

It localises to the cell membrane. The catalysed reaction is Zn(2+)(in) = Zn(2+)(out). In terms of biological role, mediates zinc uptake. May also transport other divalent cations. This is Zinc transporter ZupT from Corynebacterium glutamicum (strain ATCC 13032 / DSM 20300 / JCM 1318 / BCRC 11384 / CCUG 27702 / LMG 3730 / NBRC 12168 / NCIMB 10025 / NRRL B-2784 / 534).